The following is a 253-amino-acid chain: Triosephosphate isomerase (253 aa).

A substrate-binding site is contributed by 9-11 (NWK). Histidine 96 (electrophile) is an active-site residue. Glutamate 169 acts as the Proton acceptor in catalysis. Residues glycine 175, serine 215, and 236 to 237 (GG) each bind substrate.

This sequence belongs to the triosephosphate isomerase family. Homodimer.

It localises to the cytoplasm. It carries out the reaction D-glyceraldehyde 3-phosphate = dihydroxyacetone phosphate. Its pathway is carbohydrate biosynthesis; gluconeogenesis. It participates in carbohydrate degradation; glycolysis; D-glyceraldehyde 3-phosphate from glycerone phosphate: step 1/1. Its function is as follows. Involved in the gluconeogenesis. Catalyzes stereospecifically the conversion of dihydroxyacetone phosphate (DHAP) to D-glyceraldehyde-3-phosphate (G3P). This chain is Triosephosphate isomerase, found in Borreliella burgdorferi (strain ZS7) (Borrelia burgdorferi).